We begin with the raw amino-acid sequence, 494 residues long: UPF0371 protein spr0309 (494 aa).

This sequence belongs to the UPF0371 family.

In Streptococcus pneumoniae (strain ATCC BAA-255 / R6), this protein is UPF0371 protein spr0309.